A 486-amino-acid chain; its full sequence is ATP synthase subunit beta (486 aa).

164–171 (GGAGVGKT) is a binding site for ATP.

The protein belongs to the ATPase alpha/beta chains family. F-type ATPases have 2 components, CF(1) - the catalytic core - and CF(0) - the membrane proton channel. CF(1) has five subunits: alpha(3), beta(3), gamma(1), delta(1), epsilon(1). CF(0) has four main subunits: a(1), b(1), b'(1) and c(9-12).

Its subcellular location is the cellular thylakoid membrane. It carries out the reaction ATP + H2O + 4 H(+)(in) = ADP + phosphate + 5 H(+)(out). Its function is as follows. Produces ATP from ADP in the presence of a proton gradient across the membrane. The catalytic sites are hosted primarily by the beta subunits. The sequence is that of ATP synthase subunit beta from Prochlorococcus marinus (strain MIT 9301).